A 260-amino-acid polypeptide reads, in one-letter code: Thiazole synthase (260 aa).

K100 functions as the Schiff-base intermediate with DXP in the catalytic mechanism. 1-deoxy-D-xylulose 5-phosphate-binding positions include G161, 187–188 (AG), and 209–210 (NT).

This sequence belongs to the ThiG family. In terms of assembly, homotetramer. Forms heterodimers with either ThiH or ThiS.

It is found in the cytoplasm. It carries out the reaction [ThiS sulfur-carrier protein]-C-terminal-Gly-aminoethanethioate + 2-iminoacetate + 1-deoxy-D-xylulose 5-phosphate = [ThiS sulfur-carrier protein]-C-terminal Gly-Gly + 2-[(2R,5Z)-2-carboxy-4-methylthiazol-5(2H)-ylidene]ethyl phosphate + 2 H2O + H(+). The protein operates within cofactor biosynthesis; thiamine diphosphate biosynthesis. Its function is as follows. Catalyzes the rearrangement of 1-deoxy-D-xylulose 5-phosphate (DXP) to produce the thiazole phosphate moiety of thiamine. Sulfur is provided by the thiocarboxylate moiety of the carrier protein ThiS. In vitro, sulfur can be provided by H(2)S. The chain is Thiazole synthase from Sorangium cellulosum (strain So ce56) (Polyangium cellulosum (strain So ce56)).